The primary structure comprises 785 residues: Endonuclease MutS2 (785 aa).

335 to 342 (GPNTGGKT) serves as a coordination point for ATP. The Smr domain maps to 710 to 785 (LDLRGERYED…GNGVTIVEFK (76 aa)).

Belongs to the DNA mismatch repair MutS family. MutS2 subfamily. As to quaternary structure, homodimer. Binds to stalled ribosomes, contacting rRNA.

In terms of biological role, endonuclease that is involved in the suppression of homologous recombination and thus may have a key role in the control of bacterial genetic diversity. Its function is as follows. Acts as a ribosome collision sensor, splitting the ribosome into its 2 subunits. Detects stalled/collided 70S ribosomes which it binds and splits by an ATP-hydrolysis driven conformational change. Acts upstream of the ribosome quality control system (RQC), a ribosome-associated complex that mediates the extraction of incompletely synthesized nascent chains from stalled ribosomes and their subsequent degradation. Probably generates substrates for RQC. The polypeptide is Endonuclease MutS2 (Listeria monocytogenes serovar 1/2a (strain ATCC BAA-679 / EGD-e)).